The following is a 409-amino-acid chain: Histidine--tRNA ligase (409 aa).

Belongs to the class-II aminoacyl-tRNA synthetase family. Homodimer.

The protein localises to the cytoplasm. The enzyme catalyses tRNA(His) + L-histidine + ATP = L-histidyl-tRNA(His) + AMP + diphosphate + H(+). The chain is Histidine--tRNA ligase from Campylobacter fetus subsp. fetus (strain 82-40).